Reading from the N-terminus, the 420-residue chain is MRILYYDCFCGISGDMNLAALVDLGVPKKYLIDELLKLNLGSEYEIKIEKGQKLGITGTRVDVILKDEHHNKHELEEVLHNHEHKHNHHEIKNDEPAHSHEHHHRSLRDIEEIINSSTLNDKVKKLSLNIFMKVAEAEAKVHGRELYEVHFHEVGAVDSIVDIVGAAICIDYLKVDKILASRVQVGGGFVRCAHGIMPVPAPATVEILKNIPINTGIVQFETTTPTGAAILAANVKEFTQKLDFIIKKTAYGIGHRDLEIPNVLRVYLGEEESFQDIENQYILETNIDDMNPEIYGYVEEKLFKVGALDVFKTPICMKKGRPGIKLSVLTNEKSEREVLDVIFEETTSIGVRRYKVEKIMLKREFSKVKTEFGDITVKKAYYKGELVKYKPEYEECKDIAREKNVSIHKVYKAVYKQDLK.

Positions 81–104 (NHEHKHNHHEIKNDEPAHSHEHHH) are disordered. Residues 90–99 (EIKNDEPAHS) are compositionally biased toward basic and acidic residues.

The protein belongs to the LarC family.

The catalysed reaction is Ni(II)-pyridinium-3,5-bisthiocarboxylate mononucleotide = pyridinium-3,5-bisthiocarboxylate mononucleotide + Ni(2+). Functionally, involved in the biosynthesis of a nickel-pincer cofactor ((SCS)Ni(II) pincer complex). Binds Ni(2+), and functions in nickel delivery to pyridinium-3,5-bisthiocarboxylic acid mononucleotide (P2TMN), to form the mature cofactor. Is thus probably required for the activation of nickel-pincer cofactor-dependent enzymes. In Clostridium acetobutylicum (strain ATCC 824 / DSM 792 / JCM 1419 / IAM 19013 / LMG 5710 / NBRC 13948 / NRRL B-527 / VKM B-1787 / 2291 / W), this protein is Pyridinium-3,5-bisthiocarboxylic acid mononucleotide nickel insertion protein.